The primary structure comprises 113 residues: METVEGIMVVTTETIPGYRIVEVKGIARGGIVKATHIGRDIMAVLRNIKGGEVREYTQMMAEAREEALRRMALHAKELGANAVVNVRFATSNVGSSVAEVYAYGTAVVVEKEE.

It belongs to the UPF0145 family.

The chain is UPF0145 protein TK1926 from Thermococcus kodakarensis (strain ATCC BAA-918 / JCM 12380 / KOD1) (Pyrococcus kodakaraensis (strain KOD1)).